The following is a 251-amino-acid chain: Transcription initiation factor TFIID subunit 9B (251 aa).

Methionine 1 carries the post-translational modification N-acetylmethionine. Serine 147 is modified (phosphoserine). Phosphothreonine is present on residues threonine 159 and threonine 174. Residue serine 177 is modified to Phosphoserine. Positions 229–251 (QNTANEANPLKRKHEDDDDNDIM) are disordered.

Belongs to the TAF9 family. In terms of assembly, binds TAF5 and TAF6. Component of TFIID and the TATA-binding protein-free TAF complex (TFTC). TFIID is composed of TATA binding protein (TBP) and a number of TBP-associated factors (TAFs). Binds N-terminal domain of p53/TP53 which is essential for transcription.

Its subcellular location is the nucleus. In terms of biological role, essential for cell viability. TAF9 and TAF9B are involved in transcriptional activation as well as repression of distinct but overlapping sets of genes. May have a role in gene regulation associated with apoptosis. TAFs are components of the transcription factor IID (TFIID) complex, the TBP-free TAFII complex (TFTC), the PCAF histone acetylase complex and the STAGA transcription coactivator-HAT complex. TFIID or TFTC are essential for the regulation of RNA polymerase II-mediated transcription. The polypeptide is Transcription initiation factor TFIID subunit 9B (TAF9B) (Homo sapiens (Human)).